The sequence spans 146 residues: Hemoglobin subunit beta-1 (146 aa).

The Globin domain occupies 2 to 146 (GLTAHDRQLI…IADALGKGYH (145 aa)). His-63 and His-92 together coordinate heme b.

This sequence belongs to the globin family. Heterotetramer of two alpha chains and two beta chains. As to expression, red blood cells.

Functionally, involved in oxygen transport from the lung to the various peripheral tissues. The sequence is that of Hemoglobin subunit beta-1 (hbb1) from Xenopus laevis (African clawed frog).